The primary structure comprises 954 residues: Endoplasmic reticulum aminopeptidase 2 (954 aa).

Over 1–7 the chain is Cytoplasmic; it reads MANSCRK. A helical; Signal-anchor for type II membrane protein membrane pass occupies residues 8–28; that stretch reads LIFNIYVVFYCSAVIMPQICI. The Lumenal portion of the chain corresponds to 29–954; that stretch reads CSQFTSSPID…TLRKWLLTSI (926 aa). Asn-79 and Asn-113 each carry an N-linked (GlcNAc...) asparagine glycan. Residues Glu-194 and 328–332 each bind substrate; that span reads GAMEN. Position 364 (His-364) interacts with Zn(2+). The active-site Proton acceptor is Glu-365. Residues His-368 and Glu-387 each contribute to the Zn(2+) site. N-linked (GlcNAc...) asparagine glycosylation occurs at Asn-399. Cysteines 415 and 454 form a disulfide. N-linked (GlcNAc...) asparagine glycosylation is present at Asn-644. Cysteines 753 and 760 form a disulfide.

This sequence belongs to the peptidase M1 family. Heterodimer with ERAP1. Zn(2+) serves as cofactor. In terms of processing, N-glycosylated.

The protein localises to the endoplasmic reticulum membrane. Aminopeptidase that plays a central role in peptide trimming, a step required for the generation of most HLA class I-binding peptides. Peptide trimming is essential to customize longer precursor peptides to fit them to the correct length required for presentation on MHC class I molecules. Preferentially hydrolyzes the basic residues Arg and Lys. This Bos taurus (Bovine) protein is Endoplasmic reticulum aminopeptidase 2 (ERAP2).